The sequence spans 72 residues: Translation initiation factor IF-1 (72 aa).

One can recognise an S1-like domain in the interval 1–72; that stretch reads MSKDDVIQMQ…SRARIVFRAK (72 aa).

This sequence belongs to the IF-1 family. In terms of assembly, component of the 30S ribosomal translation pre-initiation complex which assembles on the 30S ribosome in the order IF-2 and IF-3, IF-1 and N-formylmethionyl-tRNA(fMet); mRNA recruitment can occur at any time during PIC assembly.

Its subcellular location is the cytoplasm. One of the essential components for the initiation of protein synthesis. Stabilizes the binding of IF-2 and IF-3 on the 30S subunit to which N-formylmethionyl-tRNA(fMet) subsequently binds. Helps modulate mRNA selection, yielding the 30S pre-initiation complex (PIC). Upon addition of the 50S ribosomal subunit IF-1, IF-2 and IF-3 are released leaving the mature 70S translation initiation complex. This chain is Translation initiation factor IF-1, found in Methylibium petroleiphilum (strain ATCC BAA-1232 / LMG 22953 / PM1).